A 144-amino-acid chain; its full sequence is Large ribosomal subunit protein uL13 (144 aa).

The protein belongs to the universal ribosomal protein uL13 family. In terms of assembly, part of the 50S ribosomal subunit.

This protein is one of the early assembly proteins of the 50S ribosomal subunit, although it is not seen to bind rRNA by itself. It is important during the early stages of 50S assembly. The chain is Large ribosomal subunit protein uL13 from Mycoplasmopsis agalactiae (strain NCTC 10123 / CIP 59.7 / PG2) (Mycoplasma agalactiae).